The sequence spans 614 residues: Zinc metalloproteinase-disintegrin-like BmMP (614 aa).

The signal sequence occupies residues 1 to 20; the sequence is MIQALLVTICLAVFPYQGSS. The propeptide occupies 21-188; it reads IILESGNVND…WESDEPIRNA (168 aa). Asn187 carries N-linked (GlcNAc...) asparagine glycosylation. A Peptidase M12B domain is found at 205–401; it reads KYIEFYVAVD…DRPQCILNKP (197 aa). 17 disulfide bridges follow: Cys316–Cys396, Cys356–Cys380, Cys359–Cys364, Cys412–Cys441, Cys423–Cys436, Cys425–Cys431, Cys435–Cys458, Cys449–Cys455, Cys454–Cys480, Cys467–Cys487, Cys474–Cys506, Cys499–Cys511, Cys518–Cys568, Cys533–Cys576, Cys546–Cys556, Cys563–Cys602, and Cys596–Cys607. Residue His341 participates in Zn(2+) binding. Glu342 is an active-site residue. Zn(2+)-binding residues include His345 and His351. The Disintegrin domain maps to 409-495; that stretch reads PAICGNYFVE…ECPTDIFRRN (87 aa). The D/ECD-tripeptide motif lies at 473–475; sequence DCD.

The protein belongs to the venom metalloproteinase (M12B) family. P-III subfamily. P-IIIa sub-subfamily. In terms of assembly, monomer. Requires Zn(2+) as cofactor. Expressed by the venom gland.

The protein localises to the secreted. Snake venom zinc metalloproteinase that inhibits platelet aggregation and degrades fibrinogen. The sequence is that of Zinc metalloproteinase-disintegrin-like BmMP from Bungarus multicinctus (Many-banded krait).